The chain runs to 325 residues: Hydroxymethylglutaryl-CoA lyase, mitochondrial (325 aa).

A mitochondrion-targeting transit peptide spans 1 to 27 (MATVKKVLPRRLVGLATLRAVSTSSVG). The region spanning 33–300 (VKIVEVGPRD…HTGVNLQKLL (268 aa)) is the Pyruvate carboxyltransferase domain. Arg41 lines the substrate pocket. Residue Asp42 coordinates a divalent metal cation. An N6-acetyllysine; alternate modification is found at Lys48. Lys48 bears the N6-succinyllysine; alternate mark. Lys111 is subject to N6-acetyllysine. 2 positions are modified to N6-acetyllysine; alternate: Lys137 and Lys179. N6-succinyllysine; alternate occurs at positions 137 and 179. The a divalent metal cation site is built by His233 and His235. Cys266 is a catalytic residue. Asn275 contacts a divalent metal cation. Residues 323–325 (CKL) carry the Microbody targeting signal motif. Position 324 is an N6-acetyllysine (Lys324).

The protein belongs to the HMG-CoA lyase family. In terms of assembly, homodimer; disulfide-linked. Can also form homotetramers.

The protein resides in the mitochondrion matrix. It localises to the peroxisome. The catalysed reaction is (3S)-3-hydroxy-3-methylglutaryl-CoA = acetoacetate + acetyl-CoA. It functions in the pathway metabolic intermediate metabolism; (S)-3-hydroxy-3-methylglutaryl-CoA degradation; acetoacetate from (S)-3-hydroxy-3-methylglutaryl-CoA: step 1/1. In terms of biological role, mitochondrial 3-hydroxy-3-methylglutaryl-CoA lyase that catalyzes a cation-dependent cleavage of (S)-3-hydroxy-3-methylglutaryl-CoA into acetyl-CoA and acetoacetate, a key step in ketogenesis. Terminal step in leucine catabolism. Ketone bodies (beta-hydroxybutyrate, acetoacetate and acetone) are essential as an alternative source of energy to glucose, as lipid precursors and as regulators of metabolism. This Bos taurus (Bovine) protein is Hydroxymethylglutaryl-CoA lyase, mitochondrial (HMGCL).